A 238-amino-acid polypeptide reads, in one-letter code: 7-cyano-7-deazaguanine synthase (238 aa).

ATP is bound at residue 15 to 25 (FSGGQDSTTCL). Zn(2+) is bound by residues Cys-203, Cys-218, Cys-221, and Cys-224.

It belongs to the QueC family. The cofactor is Zn(2+).

The enzyme catalyses 7-carboxy-7-deazaguanine + NH4(+) + ATP = 7-cyano-7-deazaguanine + ADP + phosphate + H2O + H(+). It functions in the pathway purine metabolism; 7-cyano-7-deazaguanine biosynthesis. In terms of biological role, catalyzes the ATP-dependent conversion of 7-carboxy-7-deazaguanine (CDG) to 7-cyano-7-deazaguanine (preQ(0)). The polypeptide is 7-cyano-7-deazaguanine synthase (Alkalilimnicola ehrlichii (strain ATCC BAA-1101 / DSM 17681 / MLHE-1)).